The chain runs to 42 residues: Kappa-actitoxin-Ael2a (42 aa).

Cystine bridges form between Cys-4-Cys-37, Cys-6-Cys-30, and Cys-20-Cys-38.

Belongs to the sea anemone type 3 (BDS) potassium channel toxin family.

It localises to the secreted. It is found in the nematocyst. Peptide with both antimicrobial and neurotoxin activities. This toxin acts both on ERG potassium channels and sodium channels. It potently and reversibly inhibits human Kv11.1/KCNH2/ERG1 (IC(50)=34 nM), rat Kv11.1/KCNH2/ERG1 and Kv11.3/KCNH7/ERG3 voltage-gated potassium channels in a similar potency. It acts as a gating-modifier toxin that shifts the voltage-dependence of ERG activation in the positive direction and suppresses its current amplitudes elicited by strong depolarizing pulses. On sodium channels, it blocks Nav1.2/SCN2A (EC(50)=31 nM), Nav1.3/SCN3A, Nav1.4/SCN4A, Nav1.5/SCN5A, Nav1.6/SCN8A, Nav1.8/SCN10A (EC(50)=92 nM). It may act by binding at site 1 or close by, only when the pore is in an open configuration. Shows antibacterial activity against the Gram-negative bacterium S.typhimurium, but not on the bacteria B.subtilis, S.aureus, and P.aeruginosa. In vivo, this toxin does not induce neurotoxic symptoms when injected into mice. This is Kappa-actitoxin-Ael2a from Anthopleura elegantissima (Green aggregating anemone).